A 777-amino-acid chain; its full sequence is Aconitate hydratase, mitochondrial (777 aa).

Substrate contacts are provided by residues Gln96 and 189–191; that span reads DSH. The [4Fe-4S] cluster site is built by Cys383, Cys446, and Cys449. Substrate-binding positions include Arg472, Arg477, Arg605, and 668–669; that span reads SR.

It belongs to the aconitase/IPM isomerase family. As to quaternary structure, monomer. [4Fe-4S] cluster is required as a cofactor.

Its subcellular location is the mitochondrion. It catalyses the reaction citrate = D-threo-isocitrate. It participates in carbohydrate metabolism; tricarboxylic acid cycle; isocitrate from oxaloacetate: step 2/2. Catalyzes the isomerization of citrate to isocitrate via cis-aconitate, a step in the citric acid cycle. The polypeptide is Aconitate hydratase, mitochondrial (ACO1) (Candida albicans (strain SC5314 / ATCC MYA-2876) (Yeast)).